We begin with the raw amino-acid sequence, 231 residues long: L-ribulose-5-phosphate 4-epimerase AraD (231 aa).

Substrate-binding positions include 27–28, 44–45, and 74–75; these read GN, SG, and SS. 3 residues coordinate Zn(2+): Asp76, His95, and His97. Asp120 acts as the Proton donor/acceptor in catalysis. His171 is a binding site for Zn(2+). The active-site Proton donor/acceptor is the Tyr229.

This sequence belongs to the aldolase class II family. AraD/FucA subfamily. Homotetramer. Requires Zn(2+) as cofactor.

The catalysed reaction is L-ribulose 5-phosphate = D-xylulose 5-phosphate. Its pathway is carbohydrate degradation; L-arabinose degradation via L-ribulose; D-xylulose 5-phosphate from L-arabinose (bacterial route): step 3/3. With respect to regulation, inhibited by glycolohydroxamate at concentration above 0.1 mM. Functionally, involved in the degradation of L-arabinose. Catalyzes the interconversion of L-ribulose 5-phosphate (LRu5P) and D-xylulose 5-phosphate (D-Xu5P) via a retroaldol/aldol mechanism (carbon-carbon bond cleavage analogous to a class II aldolase reaction). This chain is L-ribulose-5-phosphate 4-epimerase AraD, found in Escherichia coli (strain K12).